Reading from the N-terminus, the 215-residue chain is Glutaredoxin 2 (215 aa).

Positions 1 to 77 (MKLYIYDHCP…YVDKLDGKPL (77 aa)) constitute a GST N-terminal domain. Cys9 and Cys12 are disulfide-bonded.

This sequence belongs to the glutaredoxin family.

Its function is as follows. Involved in reducing some disulfides in a coupled system with glutathione reductase. Does not act as hydrogen donor for ribonucleotide reductase. The polypeptide is Glutaredoxin 2 (grxB) (Escherichia coli O157:H7).